The primary structure comprises 357 residues: 4-hydroxyphenylpyruvate dioxygenase (357 aa).

2 VOC domains span residues 17 to 137 and 165 to 316; these read GFEF…LVDR and YIDH…IFTD. 3 residues coordinate Fe cation: His168, His246, and Glu325.

It belongs to the 4HPPD family. As to quaternary structure, homotetramer. Fe cation is required as a cofactor.

It catalyses the reaction 3-(4-hydroxyphenyl)pyruvate + O2 = homogentisate + CO2. It participates in amino-acid degradation; L-phenylalanine degradation; acetoacetate and fumarate from L-phenylalanine: step 3/6. The protein is 4-hydroxyphenylpyruvate dioxygenase (hpd) of Pseudomonas aeruginosa (strain ATCC 15692 / DSM 22644 / CIP 104116 / JCM 14847 / LMG 12228 / 1C / PRS 101 / PAO1).